Consider the following 358-residue polypeptide: MERMFPPKKPSTMNSHDRPMCVQGDSGLVLTTDPKPRLRWTVELHERFVDAVTQLGGPDKATPKTIMRVMGVKGLTLYHLKSHLQKFRLGKQPHKEFNDHSIKDGMRASALELQRNTASSSAMIGRNMNEMQIEVQRRLHEQLEVQKHLQLRIEAQGKYMQSILEKAYQTLAGENMASAATNLKGIGPQTIPDMGIMKEFGSPLGFSFQDLDLYGGGGGDQLELQQNMEKPPLDGFMPMNHENLCLGKKRPNPYSGNNGKSPLMWSDDLRLQDLGSCLQDDPFKGDHHHQIQIAPPSLDRGTEMDPMSEIYDSKPEEKKFDASMKLERPSPRRAPLGERMSPMITTGTMAQGRSSPFG.

Residues 1–20 (MERMFPPKKPSTMNSHDRPM) are disordered. Residues 32 to 92 (TDPKPRLRWT…HLQKFRLGKQ (61 aa)) form the HTH myb-type domain. The H-T-H motif DNA-binding region spans 63–88 (PKTIMRVMGVKGLTLYHLKSHLQKFR). The stretch at 127-171 (NMNEMQIEVQRRLHEQLEVQKHLQLRIEAQGKYMQSILEKAYQTL) forms a coiled coil. The LHEQLE motif lies at 139–144 (LHEQLE). The disordered stretch occupies residues 310 to 358 (IYDSKPEEKKFDASMKLERPSPRRAPLGERMSPMITTGTMAQGRSSPFG). Basic and acidic residues predominate over residues 311–330 (YDSKPEEKKFDASMKLERPS). Over residues 343–358 (MITTGTMAQGRSSPFG) the composition is skewed to polar residues.

The protein belongs to the MYB-CC family. As to quaternary structure, interacts with NSP2. Expressed in leaves, stems, nodules and roots.

The protein resides in the nucleus. In terms of biological role, transcriptional regulator required for Nod-factor-induced gene expression. Transcription activator involved in the induction of NIN and ENOD40 genes, which are required for rhizobial infection and early nodule development. Possesses strong transactivation activity in vitro. Does not seem to contribute to the early steps of the arbuscular mycorrhizal fungus infection and colonization processes in roots. This is Myb family transcription factor IPN2 from Lotus japonicus (Lotus corniculatus var. japonicus).